A 178-amino-acid polypeptide reads, in one-letter code: ATP synthase subunit d, mitochondrial (178 aa).

The segment at 149–178 (NKPTFWPHTPEEQVGYKSKEQLEAEAQGHH) is disordered. Residues 165–178 (KSKEQLEAEAQGHH) show a composition bias toward basic and acidic residues.

The protein belongs to the ATPase d subunit family. In terms of assembly, F-type ATPases have 2 components, CF(1) - the catalytic core - and CF(0) - the membrane proton channel. CF(0) seems to have nine subunits: a, b, c, d, e, f, g, F6 and 8 (or A6L).

Its subcellular location is the mitochondrion. The protein resides in the mitochondrion inner membrane. Mitochondrial membrane ATP synthase (F(1)F(0) ATP synthase or Complex V) produces ATP from ADP in the presence of a proton gradient across the membrane which is generated by electron transport complexes of the respiratory chain. F-type ATPases consist of two structural domains, F(1) - containing the extramembraneous catalytic core, and F(0) - containing the membrane proton channel, linked together by a central stalk and a peripheral stalk. During catalysis, ATP synthesis in the catalytic domain of F(1) is coupled via a rotary mechanism of the central stalk subunits to proton translocation. Part of the complex F(0) domain and the peripheric stalk, which acts as a stator to hold the catalytic alpha(3)beta(3) subcomplex and subunit a/ATP6 static relative to the rotary elements. The protein is ATP synthase subunit d, mitochondrial of Drosophila melanogaster (Fruit fly).